Consider the following 202-residue polypeptide: Small ribosomal subunit protein uS4 (202 aa).

Positions 16-42 (GELPGLSRKNPRRAYPPGQHGQARKKR) are disordered. The S4 RNA-binding domain occupies 90–151 (MRLDNTVFRL…QERSRRLVEA (62 aa)).

The protein belongs to the universal ribosomal protein uS4 family. As to quaternary structure, part of the 30S ribosomal subunit. Contacts protein S5. The interaction surface between S4 and S5 is involved in control of translational fidelity.

Functionally, one of the primary rRNA binding proteins, it binds directly to 16S rRNA where it nucleates assembly of the body of the 30S subunit. With S5 and S12 plays an important role in translational accuracy. In Rippkaea orientalis (strain PCC 8801 / RF-1) (Cyanothece sp. (strain PCC 8801)), this protein is Small ribosomal subunit protein uS4.